The sequence spans 315 residues: Rab effector Noc2 (315 aa).

The RabBD domain occupies 41–158 (QRRKQHLSPA…KRSGAWFYKG (118 aa)). Residues 89 to 146 (GNGLSQCLLCGEVLGFLGSSSVFCKDCRKKVCTKCGIEASPGQKRPLWLCKICSEQRE) form an FYVE-type zinc finger. 8 residues coordinate Zn(2+): cysteine 95, cysteine 98, cysteine 112, cysteine 115, cysteine 120, cysteine 123, cysteine 138, and cysteine 141. The tract at residues 170 to 315 (GRADDPHFRP…APAGPSSCLG (146 aa)) is disordered. Composition is skewed to basic and acidic residues over residues 184–193 (PAEREPRSSE) and 221–240 (LEDRLPSTGVRDRKGDKPWK). A compositionally biased stretch (polar residues) spans 262 to 275 (GCQSSLASGETGTG). The span at 298-315 (GRAPAADAAPAGPSSCLG) shows a compositional bias: low complexity.

In terms of assembly, recruited to dense-core vesicles through specific interaction with RAB27A in endocrine cells. Interacts with RAB3A, RAB3B, RAB3C and RAB3D. Interacts with ZYX. In terms of tissue distribution, moderate to high levels of expression in thyroid, ovary, stomach, heart, pancreas, skeletal muscle, kidney and liver. Also detected in epithelial cells.

It is found in the cytoplasm. Its subcellular location is the cytoplasmic vesicle. It localises to the secretory vesicle membrane. Rab GTPase effector involved in the late steps of regulated exocytosis, both in endocrine and exocrine cells. Acts as a potential RAB3B effector protein in epithelial cells. The chain is Rab effector Noc2 (RPH3AL) from Homo sapiens (Human).